The sequence spans 330 residues: MASCLQASMNSLLPRSSSFSPHPPLSSNSSGRRNLKTFRYAFRAKASAKIPMPPINPKDPFLSTLASIAANSPEKLLNRPVNADVPPYLDIFDSPQLMSSPAQVERSVAYNEHRPRTPPPDLPSMLLDGRIVYIGMPLVPAVTELVVAELMYLQWLDPKEPIYIYINSTGTTRDDGETVGMESEGFAIYDSLMQLKNEVHTVCVGAAIGQACLLLSAGTKGKRFMMPHAKAMIQQPRVPSSGLMPASDVLIRAKEVITNRDILVELLSKHTGNSVETVANVMRRPYYMDAPKAKEFGVIDRILWRGQEKIIADVVPSEEFDKNAGIKSVV.

Residues 1 to 43 (MASCLQASMNSLLPRSSSFSPHPPLSSNSSGRRNLKTFRYAFR) constitute a chloroplast transit peptide. Positions 7–32 (ASMNSLLPRSSSFSPHPPLSSNSSGR) are disordered. Residues 8-30 (SMNSLLPRSSSFSPHPPLSSNSS) show a composition bias toward low complexity.

It belongs to the peptidase S14 family. As to quaternary structure, component of the chloroplastic Clp protease core complex which consist of at least 16 proteins: CLPP4 (3 copies), CLPP5 (3 copies), CLPR4 (2 copies), ClpP1 (1 copy), CLPP6 (1 copy), CLPR2 (1 copy), CLPT1 (1 copy), CLPT2 (1 copy) and 3 copies of CLPP3 and/or CLPR1 and/or CLPR3. The core complex is organized in two heptameric rings, one containing CLPP3,4,5,6 in a 1:2:3:1 ratio and the other CLPP1 and CLPR1,2,3,4 in a 3:1:1:1:1 ratio.

The protein localises to the plastid. It is found in the chloroplast. The sequence is that of ATP-dependent Clp protease proteolytic subunit-related protein 3, chloroplastic from Arabidopsis thaliana (Mouse-ear cress).